Here is a 311-residue protein sequence, read N- to C-terminus: Arginine/serine-rich protein 1 (311 aa).

A disordered region spans residues M1–S125. A Phosphoserine modification is found at S12. Low complexity predominate over residues S20–S31. The segment covering S32–G123 has biased composition (basic residues). Phosphoserine occurs at positions 109 and 111. Omega-N-methylarginine is present on R135.

It belongs to the RSRP family. Phosphorylated. Phosphorylation at Ser-109 and Ser-111 mediates the interaction with spliceosome proteins.

It localises to the nucleus. Its function is as follows. Probably acts as a spliceosomal factor that contributes to spliceosome assembly and regulates the isoform switching of proteins such as PARP6. The sequence is that of Arginine/serine-rich protein 1 (RSRP1) from Pongo abelii (Sumatran orangutan).